Consider the following 428-residue polypeptide: Adenylosuccinate synthetase (428 aa).

GTP is bound by residues 11–17 (GDEGKGK) and 39–41 (GHT). The active-site Proton acceptor is the D12. Residues D12 and G39 each contribute to the Mg(2+) site. Residues 12 to 15 (DEGK), 37 to 40 (NAGH), T130, R144, N226, T241, and R305 each bind IMP. H40 acts as the Proton donor in catalysis. 301 to 307 (VTTGRKR) contacts substrate. GTP-binding positions include R307, 333 to 335 (KLD), and 415 to 417 (GTG).

Belongs to the adenylosuccinate synthetase family. In terms of assembly, homodimer. The cofactor is Mg(2+).

It is found in the cytoplasm. The catalysed reaction is IMP + L-aspartate + GTP = N(6)-(1,2-dicarboxyethyl)-AMP + GDP + phosphate + 2 H(+). It functions in the pathway purine metabolism; AMP biosynthesis via de novo pathway; AMP from IMP: step 1/2. Plays an important role in the de novo pathway and in the salvage pathway of purine nucleotide biosynthesis. Catalyzes the first committed step in the biosynthesis of AMP from IMP. The protein is Adenylosuccinate synthetase of Candida tropicalis (strain ATCC MYA-3404 / T1) (Yeast).